Consider the following 187-residue polypeptide: Elongation factor P (187 aa).

It belongs to the elongation factor P family.

The protein localises to the cytoplasm. Its pathway is protein biosynthesis; polypeptide chain elongation. Involved in peptide bond synthesis. Stimulates efficient translation and peptide-bond synthesis on native or reconstituted 70S ribosomes in vitro. Probably functions indirectly by altering the affinity of the ribosome for aminoacyl-tRNA, thus increasing their reactivity as acceptors for peptidyl transferase. The sequence is that of Elongation factor P from Corynebacterium diphtheriae (strain ATCC 700971 / NCTC 13129 / Biotype gravis).